Consider the following 371-residue polypeptide: 43 kDa relaxation protein (371 aa).

Disordered regions lie at residues 1–46 (MASY…GNMP), 150–172 (KEPD…AKNT), 196–221 (RVDS…GQVQ), 263–291 (SERD…FDFE), and 328–371 (IHQE…SFSR). The segment covering 22–42 (YIAREGKYAREKDSDLEHKES) has biased composition (basic and acidic residues). Residues 157-168 (QKRHVSGKHRPN) are compositionally biased toward basic residues. The segment covering 196 to 215 (RVDSRSLKAQGIDREPERHL) has biased composition (basic and acidic residues). Residues 330-365 (QEMERQRERERLAEKQRQQEKERQRLAEQIRQKPDK) show a composition bias toward basic and acidic residues.

This sequence belongs to the MobA/MobL family.

In terms of biological role, this protein is probably required for relaxation complex formation. The protein is 43 kDa relaxation protein of Salmonella typhimurium.